Here is a 353-residue protein sequence, read N- to C-terminus: Chorismate synthase (353 aa).

NADP(+) is bound at residue arginine 48. Residues 125-127 (RSS), 238-239 (NA), glycine 278, 293-297 (KPTSS), and arginine 319 each bind FMN.

The protein belongs to the chorismate synthase family. As to quaternary structure, homotetramer. It depends on FMNH2 as a cofactor.

The catalysed reaction is 5-O-(1-carboxyvinyl)-3-phosphoshikimate = chorismate + phosphate. The protein operates within metabolic intermediate biosynthesis; chorismate biosynthesis; chorismate from D-erythrose 4-phosphate and phosphoenolpyruvate: step 7/7. Its function is as follows. Catalyzes the anti-1,4-elimination of the C-3 phosphate and the C-6 proR hydrogen from 5-enolpyruvylshikimate-3-phosphate (EPSP) to yield chorismate, which is the branch point compound that serves as the starting substrate for the three terminal pathways of aromatic amino acid biosynthesis. This reaction introduces a second double bond into the aromatic ring system. The sequence is that of Chorismate synthase from Buchnera aphidicola subsp. Cinara cedri (strain Cc).